The following is a 375-amino-acid chain: Pectate lyase B (375 aa).

An N-terminal signal peptide occupies residues methionine 1 to alanine 22. Residues cysteine 93 and cysteine 176 are joined by a disulfide bond. Residues aspartate 150, aspartate 152, glutamate 187, and aspartate 191 each contribute to the Ca(2+) site. Arginine 240 is an active-site residue. Cysteine 351 and cysteine 374 are joined by a disulfide.

Belongs to the polysaccharide lyase 1 family. PLADES subfamily. Ca(2+) serves as cofactor.

The protein localises to the secreted. It catalyses the reaction Eliminative cleavage of (1-&gt;4)-alpha-D-galacturonan to give oligosaccharides with 4-deoxy-alpha-D-galact-4-enuronosyl groups at their non-reducing ends.. It participates in glycan metabolism; pectin degradation; 2-dehydro-3-deoxy-D-gluconate from pectin: step 2/5. Its function is as follows. Involved in maceration and soft-rotting of plant tissue. The polypeptide is Pectate lyase B (pelB) (Dickeya chrysanthemi (Pectobacterium chrysanthemi)).